The following is a 356-amino-acid chain: Serine/arginine-rich splicing factor RS41 (356 aa).

2 consecutive RRM domains span residues 2–74 and 96–167; these read KPVF…WTKN and KTLF…YAVK. The segment at 73-92 is disordered; that stretch reads KNDRGGAGRSGGSRRSSSGL. Over residues 168–186 the composition is skewed to basic and acidic residues; sequence DDDSRGNGYSPERRRDRSP. The interval 168–356 is disordered; the sequence is DDDSRGNGYS…SPSRSPPAEE (189 aa). Residues S192, S194, S210, S239, S254, and S274 each carry the phosphoserine modification. Over residues 238–253 the composition is skewed to basic and acidic residues; it reads LSPDYKRDDRRRERVA. 3 tandem repeats follow at residues 267-278, 279-290, and 291-302. The segment at 267-307 is 4 X 12 AA tandem repeats of [KE]-[GK]-R -[GR]-E-S-R-S-P-P-P-Y; that stretch reads KGRGESRSPPPYEKRRESRSPPPYEKRRESRSPPPYEKRRE. Basic and acidic residues predominate over residues 268–306; sequence GRGESRSPPPYEKRRESRSPPPYEKRRESRSPPPYEKRR. The 4; truncated repeat unit spans residues 303–307; it reads EKRRE. A phosphoserine mark is found at S309, S324, S342, S347, and S351.

Belongs to the splicing factor SR family. RS subfamily. Component of the spliceosome. Interacts with RCF3 and CPL1. Interacts with DRB1/HYL1 and SE. In terms of tissue distribution, leaves, stem, roots and flowers.

It localises to the nucleus. It is found in the nucleus speckle. Functionally, required for constitutive and alternative pre-mRNA splicing. Involved in primary miRNA processing and pri-miRNA biogenesis. Binds both intronless and intron-containing pri-miRNAs. The chain is Serine/arginine-rich splicing factor RS41 (RS41) from Arabidopsis thaliana (Mouse-ear cress).